We begin with the raw amino-acid sequence, 304 residues long: Coenzyme PQQ synthesis protein B (304 aa).

Belongs to the PqqB family.

It functions in the pathway cofactor biosynthesis; pyrroloquinoline quinone biosynthesis. Its function is as follows. May be involved in the transport of PQQ or its precursor to the periplasm. This chain is Coenzyme PQQ synthesis protein B, found in Gluconobacter oxydans (strain 621H) (Gluconobacter suboxydans).